Here is a 209-residue protein sequence, read N- to C-terminus: Orotate phosphoribosyltransferase (209 aa).

Residues R96, K100, H102, and 122 to 130 each bind 5-phospho-alpha-D-ribose 1-diphosphate; that span reads EDLISTGGS. Residue S126 coordinates orotate.

The protein belongs to the purine/pyrimidine phosphoribosyltransferase family. PyrE subfamily. As to quaternary structure, homodimer. Mg(2+) serves as cofactor.

The catalysed reaction is orotidine 5'-phosphate + diphosphate = orotate + 5-phospho-alpha-D-ribose 1-diphosphate. The protein operates within pyrimidine metabolism; UMP biosynthesis via de novo pathway; UMP from orotate: step 1/2. Functionally, catalyzes the transfer of a ribosyl phosphate group from 5-phosphoribose 1-diphosphate to orotate, leading to the formation of orotidine monophosphate (OMP). This chain is Orotate phosphoribosyltransferase, found in Streptococcus agalactiae serotype Ia (strain ATCC 27591 / A909 / CDC SS700).